The following is a 1408-amino-acid chain: TSET complex member tstA (1408 aa).

3 disordered regions span residues 259 to 347, 998 to 1055, and 1091 to 1139; these read FWPT…SIIA, QQSS…AVGS, and SSSS…TNLN. Low complexity predominate over residues 266–308; it reads NNNNNNNNQQINNNNNNNNNNNNNNNNNNNNNNNNNNNNNQNN. Residues 309–318 show a composition bias toward polar residues; that stretch reads LINGISSMNL. 2 stretches are compositionally biased toward low complexity: residues 319-347 and 998-1051; these read SSIT…SIIA and QQSS…ISTS.

This sequence belongs to the TPLATE family. Component of the TSET complex, a heterohexamer composed of tstA, tstB, tstC, tstD, tstE and tstF, which may act in plasma membrane turnover. tstA, tstB, tstC and tstD are likely to be the core complex members with tstE and tstF acting as associated scaffold proteins.

The sequence is that of TSET complex member tstA from Dictyostelium discoideum (Social amoeba).